The sequence spans 511 residues: Tryptophan 5-halogenase PyrH (511 aa).

The FAD site is built by glycine 10, alanine 13, serine 36, valine 39, isoleucine 42, valine 44, and alanine 47. L-tryptophan is bound at residue serine 50. Residue lysine 75 is part of the active site. Residues proline 93, glutamine 160, and glutamine 163 each coordinate L-tryptophan. Valine 195 and leucine 345 together coordinate FAD. 2 residues coordinate chloride: threonine 356 and glycine 357. Isoleucine 358 is an FAD binding site. 2 residues coordinate L-tryptophan: glycine 450 and tyrosine 454.

Belongs to the flavin-dependent halogenase family. Bacterial tryptophan halogenase subfamily. Homodimer.

It catalyses the reaction L-tryptophan + FADH2 + chloride + O2 = 5-chloro-L-tryptophan + FAD + 2 H2O. The protein operates within antibiotic biosynthesis. In terms of biological role, involved in the biosynthesis of the antibiotic compound pyrroindomycin B. Catalyzes the chlorination of tryptophan (Trp) at C5 position to yield 5-chloro-L-tryptophan. It is also able to use bromide ions to generate monobrominated Trp, but the brominating activity is only about 75% of the chlorinating activity. The chain is Tryptophan 5-halogenase PyrH from Streptomyces rugosporus.